The sequence spans 299 residues: Ribosomal RNA small subunit methyltransferase H (299 aa).

S-adenosyl-L-methionine contacts are provided by residues 35-37, Asp54, Tyr80, Asp101, and Gln108; that span reads GGH.

It belongs to the methyltransferase superfamily. RsmH family.

The protein resides in the cytoplasm. The catalysed reaction is cytidine(1402) in 16S rRNA + S-adenosyl-L-methionine = N(4)-methylcytidine(1402) in 16S rRNA + S-adenosyl-L-homocysteine + H(+). Specifically methylates the N4 position of cytidine in position 1402 (C1402) of 16S rRNA. This chain is Ribosomal RNA small subunit methyltransferase H, found in Coprothermobacter proteolyticus (strain ATCC 35245 / DSM 5265 / OCM 4 / BT).